The primary structure comprises 156 residues: uncharacterized protein (156 aa).

This is an uncharacterized protein from Haemophilus influenzae (strain ATCC 51907 / DSM 11121 / KW20 / Rd).